The sequence spans 442 residues: MDRDVLEKFIDLQDKENDIDTKSKIYHEVTDRGSVTPTFNQGSSGMSPKSVGSSGRNKNIQLQLTPTKADPTSTLDSHPLKGDNSDQDDITGNMKENEDDVSLGSGKVTVKNNGNGVSAATNGKGGNQELGIRRSNTWKRKSLIMPLMSPEHTVKQQQRQSYQQHCKPSESVSNTPLGRKYRSKLDRNDGQKSVRSSISSIGSLLPDGATTEFSASPATKLKLPTTTTDTAKVVPSVSEDDNDMESLLQSLANKELEILERTRRVHDLFRQIKIEDKIIKQNAEELQQLKKKVSRLVGNQVQGQNSNTTLPAESHGESNNAETADNKSSSLWTKSVSLLNQFDQIIQGTVETKLGLGDSGSSATENQSEGKPKGDDNAGSAIWSLVNEFKNGLGLLATEEEDADGSIGTIATGLATNMEDYGTRKAESSTQAKEIEMYHYSH.

Positions 16-31 (ENDIDTKSKIYHEVTD) are enriched in basic and acidic residues. Disordered regions lie at residues 16 to 138 (ENDI…SNTW), 151 to 194 (EHTV…QKSV), 298 to 328 (GNQV…DNKS), and 354 to 379 (LGLG…DNAG). Residues 42–55 (GSSGMSPKSVGSSG) show a composition bias toward low complexity. 3 stretches are compositionally biased toward polar residues: residues 56–76 (RNKN…STLD), 110–121 (VKNNGNGVSAAT), and 155–176 (KQQQ…SNTP). Residues 183 to 192 (SKLDRNDGQK) show a composition bias toward basic and acidic residues. Residues 270–300 (RQIKIEDKIIKQNAEELQQLKKKVSRLVGNQ) are a coiled coil.

Belongs to the TDA11 family.

The protein localises to the cytoplasm. This is Topoisomerase I damage affected protein 11 (TDA11) from Kluyveromyces lactis (strain ATCC 8585 / CBS 2359 / DSM 70799 / NBRC 1267 / NRRL Y-1140 / WM37) (Yeast).